We begin with the raw amino-acid sequence, 1621 residues long: MALQSAPKLLYSSPSPSVFSANERRVAFSDFVGLSKKRSRRRRIAGTFRNFPALSAVSSAIKAVVDVDRAHHSTDSGSPTVSTSSHPLDQQVVNLEDILAERGACGVGFIANLDNKGSFQIVKDALTALGCMEHRGGCGSDNDSGDGSGVMTAIPWDLFNDWGKDQGIGPFDRSHTGVGMVFLPKDDLLAEEAKKVVLDTFAQEGIEVIGWRSVPTNVSVVGRNAKETMPNIQQVFVRIIKEDSTDDIERELYICRKLIERAASSHTWASELYFCSLSNQTIIYKGMLRSEVLGMFYYDLQNERYTSPFAIYHRRYSTNTSPRWPLAQPMRFLGHNGEINTIQGNLNWMRSREPSIQSPVWRGRENEIRPYGNPKASDSANLDSAAELLIRSGRTPEEALMILVPEAYKNHPTLMIKYPEAVDFYDYYKGQMETWDGPALLLFSDGKTVGACLDRNGLRPARYWRTVDNVVYVASEVGVLPMDESKVTMKGRLGPGMMISVDLSSGQVYENTEVKKRVASSNPYGKWVKENLRSLKAVNFLSRALLENDTILRNQQAFGYSSEDVQMVIESMASQGKEPTFCMGDDIPLAVMSQKPHMLYDYFKQRFAQVTNPAIDPLREGLVMSLEVNIGKRGNILEVGPENASQVILPSPVLNEGELEALVNDPLLKAQMLPIFFDIRKGVEGTLEKRLNRLCEAADEAVRNGSQMLVLSDRSEELEPTRPAIPILLAVGAVHQHLIQNGLRMYTSIVVDTAQCFSTHQFACLIGYGASAICPYLALETCRQWRLSNKTVNLMRTGKIPTVTIEQAQKNFCKAVKSGLLKILSKMGISLLSSYCGAQIFEIYGLGKDVVDIAFQGSVSKMGGLTLDELARETLSFWVKAFSEDTAKRLENFGFIQFRPGGEYHVNNPEMSKLLHKAVRNKSESAYAVYQQHLANRPVSVLRDLLEFKSDRAPISVGKVEPATSIVERFCTGGMSLGAISRETHEAIAIAMNRLGGKSNSGEGGEDPIRWRPLTDVVDGYSSTLPHLKGLQNGDTATSAIKQVASGRFGVTPTFLVNADQIEIKIAQGAKPGEGGQLPGKKVSAYIARLRNSKPGVPLISPPPHHDIYSIEDLAQLIYDLHQINPKEKVSVKLVAEAGIGTVASGVAKGNADIIQVSGHDGGTGASPISSIKHAGGPWELGLSETHQTLISNGLRERVILRVDGGLKCGVDVMMAAAMGADEYGFGSLAMIATGCVMARICHTNNCPVGVASQREELRARFPGVPGDLVNFFLYVAEEVRGILAQLGFEKLDDIIGRTDILKPRDISLMKTQHLDLSYILASAGLPTMSSTAIRKQEVHTNGPVLDDQILSDPEIIDAIENEKIVNKTVKIFNVDRAVCGRIAGVIAKKYGDTGFAGQLNLTFEGSAGQSFAVFLTPGMNIRLVGESNDYVGKGMAGGELIVTPAENPGFRPEDATIVGNTCLYGATGGQIFVRGKAGERFAVRNSLAEAVVEGTGDHCCEYMTGGCVVILGKVGRNVAAGMTGGLAYILDEDDTLIPKVNKEIVKIQRVTAPVGQMQLKNLIEAHVEKTGSSKGASILKDWDKYLPLFWQLVPPSEEDTPEASAMFEQMTSEGASLQSA.

The N-terminal 57 residues, 1–57, are a transit peptide targeting the chloroplast; the sequence is MALQSAPKLLYSSPSPSVFSANERRVAFSDFVGLSKKRSRRRRIAGTFRNFPALSAV. The Nucleophile role is filled by C105. Residues 105–504 form the Glutamine amidotransferase type-2 domain; that stretch reads CGVGFIANLD…PGMMISVDLS (400 aa). Residue 1183-1240 coordinates FMN; it reads LSETHQTLISNGLRERVILRVDGGLKCGVDVMMAAAMGADEYGFGSLAMIATGCVMAR. [3Fe-4S] cluster is bound by residues C1236, C1242, and C1247.

It belongs to the glutamate synthase family. Interacts with ferredoxin. Interacts (via FMN-binding domain) with SQD1. Requires [3Fe-4S] cluster as cofactor. FMN serves as cofactor. Expressed in young leaves. Not detected in mature leaves.

It is found in the plastid. It localises to the chloroplast stroma. It catalyses the reaction 2 oxidized [2Fe-2S]-[ferredoxin] + 2 L-glutamate = L-glutamine + 2 reduced [2Fe-2S]-[ferredoxin] + 2-oxoglutarate + 2 H(+). It functions in the pathway amino-acid biosynthesis; L-glutamate biosynthesis via GLT pathway; L-glutamate from 2-oxoglutarate and L-glutamine (ferredoxin route): step 1/1. It participates in energy metabolism; nitrogen metabolism. Inhibited by N-bromosuccinimide, which is specific for modification of tryptophan residues probably involved in the electron transfer from ferredoxin. Its function is as follows. Catalyzes the reductive conversion of 2-oxoglutarate plus glutamine to two molecules of glutamate, using reduced ferredoxin as the electron donor. Contains one FMN but no FAD. The FMN-binding domain is also involved in the delivery of sulfite to the reaction center of SQD1. The protein is Ferredoxin-dependent glutamate synthase, chloroplastic of Spinacia oleracea (Spinach).